The chain runs to 975 residues: E3 ubiquitin-protein ligase NEDD4-like (975 aa).

N-acetylalanine is present on A2. One can recognise a C2 domain in the interval 4–126 (GLGEPVYGLS…TEDPTMERPY (123 aa)). Disordered stretches follow at residues 178–202 (DSND…WEEK), 244–272 (AAHR…VPEP), and 285–312 (DSLG…EELS). Positions 193 to 226 (PPLPPGWEEKVDNLGRTYYVNHNNRTTQWHRPSL) constitute a WW 1 domain. Phosphoserine is present on S312. The residue at position 318 (T318) is a Phosphothreonine. Position 342 is a phosphoserine; by WNK1 and WNK4 (S342). 2 disordered regions span residues 349-393 (EQGH…GWEE) and 424-496 (GASG…KVTQ). A Phosphothreonine; by SGK1 modification is found at T367. The region spanning 385 to 418 (PGLPSGWEERKDAKGRTYYVNHNNRTTTWTRPIM) is the WW 2 domain. Position 446 is a phosphoserine (S446). S448 is modified (phosphoserine; by PKA and SGK1). A Phosphoserine; by WNK1 and WNK4 modification is found at S449. Residues 460 to 471 (GAKDSPVRRAVK) are compositionally biased toward basic and acidic residues. Residues S464, S475, S479, S483, and S487 each carry the phosphoserine modification. 2 consecutive WW domains span residues 497-530 (SFLP…DPRL) and 548-581 (GPLP…DPRL). The 335-residue stretch at 640 to 974 (RPDVLKARLW…VENAQGFEGV (335 aa)) folds into the HECT domain. Catalysis depends on C942, which acts as the Glycyl thioester intermediate.

In terms of assembly, interacts with UBE2E3. Interacts with NDFIP1; this interaction activates the E3 ubiquitin-protein ligase. Interacts with NDFIP2; this interaction activates the E3 ubiquitin-protein ligase. Interacts (via WW domains) with SCN1A. Interacts (via WW domains) with SCN2A. Interacts (via WW domains) with SCN3A. Interacts (via WW domains) with SCN5A. Interacts (via WW domains) with SCN8A. Interacts (via WW domains) with SCN9A. Interacts (via WW domains) with SCN10A. Interacts (via WW domains) with CLCN5. Interacts with SMAD2. Interacts with SMAD3. Interacts with SMAD6. Interacts with SMAD7. The phosphorylated form interacts with 14-3-3 proteins. Interacts with TNK2. Interacts with WNK1. Interacts with SGK1. Interacts (via C2 domain) with NPC2. Interacts with ARRDC4. Interacts with KCNQ1; promotes internalization of KCNQ1. Interacts (via domains WW1, 3 and 4) with USP36; the interaction inhibits ubiquitination of, at least, NTRK1, KCNQ2 and KCNQ3 by NEDD4L. Interacts with PRRG4 (via cytoplasmic domain). Interacts with LDLRAD3; the interaction is direct. Interacts with UBE2D2. Interacts with TTYH2 and TTYH3. (Microbial infection) Interacts with Epstein-Barr virus LMP2A. Post-translationally, phosphorylated by SGK1 or PKA; which impairs interaction with SCNN. Interaction with YWHAH inhibits dephosphorylation. In terms of processing, auto-ubiquitinated. Deubiquitinated by USP36, no effect on NEDD4L protein levels. Both proteins interact and regulate each other's ubiquitination levels. Ubiquitously expressed, with highest levels in prostate, pancreas, and kidney. Expressed in melanocytes.

Its subcellular location is the cytoplasm. It is found in the golgi apparatus. The protein resides in the endosome. It localises to the multivesicular body. It carries out the reaction S-ubiquitinyl-[E2 ubiquitin-conjugating enzyme]-L-cysteine + [acceptor protein]-L-lysine = [E2 ubiquitin-conjugating enzyme]-L-cysteine + N(6)-ubiquitinyl-[acceptor protein]-L-lysine.. The enzyme catalyses [E2 ubiquitin-conjugating enzyme]-S-ubiquitinyl-L-cysteine + [acceptor protein]-L-cysteine = [E2 ubiquitin-conjugating enzyme]-L-cysteine + [acceptor protein]-S-ubiquitinyl-L-cysteine.. Its pathway is protein modification; protein ubiquitination. Its activity is regulated as follows. Activated by NDFIP1- and NDFIP2-binding. In terms of biological role, E3 ubiquitin-protein ligase that mediates the polyubiquitination of lysine and cysteine residues on target proteins and is thereby implicated in the regulation of various signaling pathways including autophagy, innate immunity or DNA repair. Inhibits TGF-beta signaling by triggering SMAD2 and TGFBR1 ubiquitination and proteasome-dependent degradation. Downregulates autophagy and cell growth by ubiquitinating and reducing cellular ULK1 or ASCT2 levels. Promotes ubiquitination and internalization of various plasma membrane channels such as ENaC, SCN2A/Nav1.2, SCN3A/Nav1.3, SCN5A/Nav1.5, SCN9A/Nav1.7, SCN10A/Nav1.8, KCNA3/Kv1.3, KCNH2, EAAT1, KCNQ2/Kv7.2, KCNQ3/Kv7.3 or CLC5. Promotes ubiquitination and degradation of SGK1 and TNK2. Ubiquitinates BRAT1 and this ubiquitination is enhanced in the presence of NDFIP1. Plays a role in dendrite formation by melanocytes. Involved in the regulation of TOR signaling. Ubiquitinates and regulates protein levels of NTRK1 once this one is activated by NGF. Plays a role in antiviral innate immunity by catalyzing 'Lys-29'-linked cysteine ubiquitination of TRAF3, resulting in enhanced 'Lys-48' and 'Lys-63'-linked ubiquitination of TRAF3. Ubiquitinates TTYH2 and TTYH3 and regulates protein levels of TTYH2. This chain is E3 ubiquitin-protein ligase NEDD4-like, found in Homo sapiens (Human).